Here is a 160-residue protein sequence, read N- to C-terminus: Ribosomal RNA large subunit methyltransferase H (160 aa).

2 residues coordinate S-adenosyl-L-methionine: Leu-76 and Gly-108.

The protein belongs to the RNA methyltransferase RlmH family. In terms of assembly, homodimer.

It localises to the cytoplasm. The enzyme catalyses pseudouridine(1915) in 23S rRNA + S-adenosyl-L-methionine = N(3)-methylpseudouridine(1915) in 23S rRNA + S-adenosyl-L-homocysteine + H(+). Its function is as follows. Specifically methylates the pseudouridine at position 1915 (m3Psi1915) in 23S rRNA. This Rhodopseudomonas palustris (strain ATCC BAA-98 / CGA009) protein is Ribosomal RNA large subunit methyltransferase H.